The primary structure comprises 355 residues: uncharacterized protein (355 aa).

The J domain maps to 9-75 (DYYDILNISV…KLREKYDKLG (67 aa)).

The protein belongs to the DnaJ family.

The protein localises to the cytoplasm. This is an uncharacterized protein from Schizosaccharomyces pombe (strain 972 / ATCC 24843) (Fission yeast).